Consider the following 1186-residue polypeptide: Pumilio homolog 1 (1186 aa).

An N-acetylserine modification is found at serine 2. Serine 19 carries the phosphoserine modification. The disordered stretch occupies residues 22 to 73; sequence LKHHPQEPANPNMPVVLTSGTGSQAQPQPAANQALAAGTHSSPVPGSIGVAG. Over residues 45–58 the composition is skewed to low complexity; that stretch reads QAQPQPAANQALAA. 3 positions are modified to phosphoserine: serine 75, serine 98, and serine 106. The residue at position 112 (threonine 112) is a Phosphothreonine. Serine 124, serine 159, serine 197, serine 209, and serine 229 each carry phosphoserine. The tract at residues 233-272 is disordered; it reads SCLRKGGFGPRDADSDENDKGEKKNKGTFDGDKLGDLKEE. The segment covering 250 to 272 has biased composition (basic and acidic residues); sequence NDKGEKKNKGTFDGDKLGDLKEE. At serine 305 the chain carries Phosphoserine. Low complexity predominate over residues 485-502; sequence TNSANQQTTPQAQQGQQQ. Disordered regions lie at residues 485-524 and 613-648; these read TNSA…GQQT and AGTT…FYGN. A compositionally biased stretch (polar residues) spans 511-524; it reads RPLTPNQNQQGQQT. The residue at position 514 (threonine 514) is a Phosphothreonine. The span at 626 to 639 shows a compositional bias: low complexity; that stretch reads QQPQPQPQQQPNNN. Phosphoserine is present on residues serine 709 and serine 714. The tract at residues 742 to 775 is disordered; the sequence is GPVGMPLPSQGPGHSQTPPPSLSSHGSSSSLNLG. Low complexity predominate over residues 763-775; sequence LSSHGSSSSLNLG. Position 796 is an omega-N-methylarginine (arginine 796). Serine 806 and serine 822 each carry phosphoserine. Positions 828–1168 constitute a PUM-HD domain; that stretch reads GRSRLLEDFR…HILAKLEKYY (341 aa). Pumilio repeat units follow at residues 848–883, 884–919, 920–955, 956–991, 992–1027, 1028–1063, 1064–1099, and 1103–1142; these read EIAG…LVFN, EILQ…ALAE, RIRG…EMVR, ELDG…FIID, AFKG…PILE, ELHQ…KIVA, EIRG…VLID, and TMND…IVMH. An adenine-nucleotide binding in RNA target region spans residues 863–867; the sequence is SRFIQ. Residues 899 to 903 form a uracil-nucleotide binding in RNA target region; it reads NYVIQ. Positions 935 to 939 are adenine-nucleotide binding in RNA target; sequence CRVIQ. Residues 971–975 form a non-specific-nucleotide binding in RNA target region; that stretch reads NHVVQ. Residues 1007 to 1011 are adenine-nucleotide binding in RNA target; that stretch reads CRVIQ. A uracil-nucleotide binding in RNA target region spans residues 1043–1047; that stretch reads NYVIQ. Guanine-nucleotide binding in RNA target regions lie at residues 1079 to 1083 and 1080 to 1083; these read SNVVE and NVVE. The interval 1122 to 1126 is uracil-nucleotide binding in RNA target; that stretch reads NYVVQ.

In terms of assembly, recruits the CCR4-POP2-NOT deadenylase leading to translational inhibition and mRNA degradation. Interacts with TRIM71 (via NHL repeats) in an RNA-dependent manner. In terms of processing, phosphorylation at Ser-714 promotes RNA-binding activity. Following growth factor stimulation phosphorylated at Ser-714, promoting binding to the 3'-UTR of CDKN1B/p27 mRNA.

The protein localises to the cytoplasm. It localises to the P-body. Its subcellular location is the cytoplasmic granule. Sequence-specific RNA-binding protein that acts as a post-transcriptional repressor by binding the 3'-UTR of mRNA targets. Binds to an RNA consensus sequence, the Pumilio Response Element (PRE), 5'-UGUANAUA-3', that is related to the Nanos Response Element (NRE). Mediates post-transcriptional repression of transcripts via different mechanisms: acts via direct recruitment of the CCR4-POP2-NOT deadenylase leading to translational inhibition and mRNA degradation. Also mediates deadenylation-independent repression by promoting accessibility of miRNAs. Following growth factor stimulation, phosphorylated and binds to the 3'-UTR of CDKN1B/p27 mRNA, inducing a local conformational change that exposes miRNA-binding sites, promoting association of miR-221 and miR-222, efficient suppression of CDKN1B/p27 expression, and rapid entry to the cell cycle. Acts as a post-transcriptional repressor of E2F3 mRNAs by binding to its 3'-UTR and facilitating miRNA regulation. Represses a program of genes necessary to maintain genomic stability such as key mitotic, DNA repair and DNA replication factors. Its ability to repress those target mRNAs is regulated by the lncRNA NORAD (non-coding RNA activated by DNA damage) which, due to its high abundance and multitude of PUMILIO binding sites, is able to sequester a significant fraction of PUM1 and PUM2 in the cytoplasm. Involved in neuronal functions by regulating ATXN1 mRNA levels: acts by binding to the 3'-UTR of ATXN1 transcripts, leading to their down-regulation independently of the miRNA machinery. Plays a role in cytoplasmic sensing of viral infection. In testis, acts as a post-transcriptional regulator of spermatogenesis by binding to the 3'-UTR of mRNAs coding for regulators of p53/TP53. Involved in embryonic stem cell renewal by facilitating the exit from the ground state: acts by targeting mRNAs coding for naive pluripotency transcription factors and accelerates their down-regulation at the onset of differentiation. Binds specifically to miRNA MIR199A precursor, with PUM2, regulates miRNA MIR199A expression at a postranscriptional level. The protein is Pumilio homolog 1 (PUM1) of Pongo abelii (Sumatran orangutan).